Reading from the N-terminus, the 769-residue chain is Disintegrin and metalloproteinase domain-containing protein 11 (769 aa).

The N-terminal stretch at 1–23 (MRLLRRWAFAALLLSLLPTPGLG) is a signal peptide. The propeptide occupies 24-225 (TQGPAGALRW…PNRPRLRRKR (202 aa)). The segment at 40–78 (GGPGAPEVTEPSRLVRESSGGEVRKQQLDTRVRQEPPGG) is disordered. Basic and acidic residues predominate over residues 61–73 (EVRKQQLDTRVRQ). Residues Asn-96 and Asn-163 are each glycosylated (N-linked (GlcNAc...) asparagine). At 226–734 (QVRRGHPTVH…ERYKGPSGTN (509 aa)) the chain is on the extracellular side. The Peptidase M12B domain maps to 239–438 (KYVELIVIND…GGGSCLFNKP (200 aa)). Residues 332-769 (GRTFQSTSSG…NIRRGRSGGA (438 aa)) are required for localization to cerebellar cortex basket cell terminals. Also required for localization of KCNA1, KCNA2, DLG4 and ADAM22 to cerebellar cortex basket cell terminal perisomatic axons and pinceaux. Cystine bridges form between Cys-349–Cys-433, Cys-392–Cys-417, Cys-394–Cys-401, and Cys-503–Cys-523. A Disintegrin domain is found at 444-531 (PPECGNGFVE…QCPPNLHKLD (88 aa)). N-linked (GlcNAc...) asparagine glycans are attached at residues Asn-605 and Asn-673. 3 disulfide bridges follow: Cys-677–Cys-692, Cys-686–Cys-698, and Cys-700–Cys-709. The EGF-like domain maps to 677–709 (CPGSGERRICSHHGVCSNEGKCICQPDWTGKDC). A helical membrane pass occupies residues 735-755 (IIIGSIAGAVLVAAIVLGGTG). The Cytoplasmic segment spans residues 756-769 (WGFKNIRRGRSGGA).

In terms of assembly, interacts with LGI1 and LGI4. Interacts with KCNA1/KV1.1, KCNA2/KV1.2, DLG4/PSD-95 and ADAM22. The precursor is cleaved by a furin endopeptidase. In terms of tissue distribution, expressed predominantly in brain. Slightly detected or not at all in other tissues.

It localises to the presynaptic cell membrane. The protein localises to the perikaryon. The protein resides in the cell projection. Its subcellular location is the axon. Functionally, probable ligand for integrin in the brain. This is a non catalytic metalloprotease-like protein. Required for localization of the potassium channel subunit proteins KCNA1/KV1.1 and KCNA2/KV1.2 at cerebellar cortex basket cell distal terminals, is thereby involved in ephaptic inhibitory synchronization of Purkinje cell firing and response to stress. Plays a role in spatial learning and motor coordination. Involved in the nociceptive pain response to chemical-derived stimulation. The protein is Disintegrin and metalloproteinase domain-containing protein 11 (ADAM11) of Homo sapiens (Human).